Consider the following 1597-residue polypeptide: Collagen alpha-1(XVII) chain (1597 aa).

Disordered regions lie at residues 1-155 (MDVT…PSTR) and 168-188 (GSRS…PIPK). At 1–468 (MDVTKKNKRD…CGSCCSWWKW (468 aa)) the chain is on the cytoplasmic side. The interval 1 to 567 (MDVTKKNKRD…AEQENGNLRG (567 aa)) is nonhelical region (NC16A). A compositionally biased stretch (basic and acidic residues) spans 9 to 19 (RDGSEVTERII). 3 stretches are compositionally biased toward polar residues: residues 58–96 (THGS…SPGS), 111–120 (EGSSSGNSSP), and 170–184 (RSAS…SNTL). Positions 146–231 (RLQSASPSTR…WSSTLPAGSS (86 aa)) are necessary for interaction with DST and for the recruitment of DST to hemidesmosome. Residues 469–489 (LLGLLLTWLLLLGLLFGLIAL) form a helical; Signal-anchor for type II membrane protein membrane-spanning segment. Residues 490 to 1597 (AEEVRALKAR…KGGSWRLTSY (1108 aa)) are Extracellular-facing. Disordered regions lie at residues 562–857 (NGNL…SSSS), 907–927 (LRGP…FRVR), 970–1041 (LETY…ISSS), 1289–1316 (TAGV…VSGA), and 1344–1394 (FIVG…SSMG). Positions 568–1572 (SPGPKGDMGS…ELPLEEQPLA (1005 aa)) are triple-helical region. Over residues 604-632 (PKGQKGSVGEPGMEGPMGQRGREGPMGPR) the composition is skewed to low complexity. Gly residues predominate over residues 665–674 (GPKGSGGSPG). Low complexity-rich tracts occupy residues 730 to 748 (PGAV…AGPD) and 774 to 796 (DPGK…PGRP). Over residues 820 to 838 (PGPPGPPGAMGPPGPPGAP) the composition is skewed to pro residues. Positions 847-857 (AGESFMGSSSS) are enriched in low complexity. Pro residues-rich tracts occupy residues 910–922 (PPGP…PPDL), 977–986 (PPGPPGPPGP), 1023–1035 (PGPP…PGPP), 1296–1310 (PGPP…PRGP), and 1348–1357 (PPGPPGPQGP). The segment covering 1377 to 1393 (SSHSASVSRGSSYSSSM) has biased composition (low complexity). Residue Asn-1493 is glycosylated (N-linked (GlcNAc...) asparagine). Residues 1531-1566 (GHPALEGTREKKETKVTKSMRGGEREASPSSHELPL) form a disordered region. Residues 1537–1557 (GTREKKETKVTKSMRGGEREA) are compositionally biased toward basic and acidic residues. The nonhelical region (NC1) stretch occupies residues 1573-1597 (SVLAMAYGVHVKISPKGGSWRLTSY).

Homotrimers of alpha 1(XVII)chains. Interacts (via cytoplasmic region) with ITGB4 (via cytoplasmic region). Interacts (via cytoplasmic region) with DST (via N-terminus). Interacts (via N-terminus) with PLEC. Interacts (via cytoplasmic region) with DSP. The intracellular/endo domain is disulfide-linked. In terms of processing, prolines at the third position of the tripeptide repeating unit (G-X-Y) are hydroxylated in some or all of the chains. Post-translationally, the ectodomain is shedded from the surface of keratinocytes resulting in a 120-kDa soluble form, also named as 120 kDa linear IgA disease antigen homolog. The shedding is mediated by membrane-bound metalloproteases. Upper lamina lucidalhemidesmosome.

The protein resides in the cell junction. It localises to the hemidesmosome. It is found in the membrane. Its subcellular location is the secreted. The protein localises to the extracellular space. The protein resides in the extracellular matrix. It localises to the basement membrane. Its function is as follows. The 120 kDa linear IgA disease antigen homolog is an anchoring filament component involved in dermal-epidermal cohesion. The protein is Collagen alpha-1(XVII) chain (COL17A1) of Canis lupus familiaris (Dog).